The primary structure comprises 197 residues: uncharacterized protein (197 aa).

The N-terminal stretch at 1–23 (MSARAPKELRLALPPCLLNRTFA) is a signal peptide. Residues 24–61 (SPNASGSGNTGARGPGAVGSGTCITQVGQQLFQSFSST) are Extracellular-facing. N-linked (GlcNAc...) asparagine glycosylation is present at N26. A helical membrane pass occupies residues 62–82 (LVLIVLVTLIFCLIVLSLSTF). Residues 83–197 (HIHKRRMKKR…EGLLQTVVLS (115 aa)) lie on the Cytoplasmic side of the membrane. The disordered stretch occupies residues 94–180 (MQRAQEEYER…SSPQGAHAAS (87 aa)). 2 stretches are compositionally biased toward basic and acidic residues: residues 96–107 (RAQEEYERDHCS) and 125–136 (HAKETRLERQPR). Over residues 141-161 (CAPSNASSLSSSSPGLPCQGP) the composition is skewed to low complexity. Pro residues predominate over residues 162–171 (CAPPPPPPAS).

It localises to the membrane. This is an uncharacterized protein from Homo sapiens (Human).